The following is a 461-amino-acid chain: MVSRVQLPPEIQLAQRLAGNEQVTRDRAVRKLRKYIVARTQRAAGGFTHDELLKVWKGLFYCMWMQDKPLLQEELGRTISQLVHAFQTTEAQHLFLQAFWQTMNREWTGIDRLRLDKFYMLMRMVLNESLKVLKMQGWEERQIEELLELLMTEILHPSSQAPNGVKSHFIEIFLEELTKVGAEELTADQNLKFIDPFCRIAARTKDSLVLNNITRGIFETIVEQAPLAIEDLLNELDTQDEEVASDSDESSEGGERGDALSQKRSEKPPAGSICRAEPEAGEEQAGDDRDSGGPVLQFDYEAVANRLFEMASRQSTPSQNRKRLYKVIRKLQDLAGGIFPEDEIPEKACRRLLEGRRQKKTKKQKRLLRLQQERGKGEKEPPSPGMERKRSRRRGVGADPEARAEAGEQPGTAERALLRDQPRGRGQRGARQRRRTPRPLTSARAKAANVQEPEKKKKRRE.

Acidic residues predominate over residues 239-252 (QDEEVASDSDESSE). 2 disordered regions span residues 239 to 295 (QDEE…GGPV) and 354 to 461 (EGRR…KRRE). Phosphoserine occurs at positions 245, 247, 250, and 251. The segment covering 253–267 (GGERGDALSQKRSEK) has biased composition (basic and acidic residues). Residues 357-368 (RQKKTKKQKRLL) are compositionally biased toward basic residues. The segment covering 371–381 (QQERGKGEKEP) has biased composition (basic and acidic residues). Ser383 carries the post-translational modification Phosphoserine. A Phosphothreonine modification is found at Thr412. Positions 425-437 (RGQRGARQRRRTP) are enriched in basic residues. At Gln427 the chain carries N5-methylglutamine.

Belongs to the RRP1 family. As to quaternary structure, interacts with C1QBP. Interacts with RRP1B. Methylated at Gln-427 by N6AMT1. Ubiquitously expressed in fetal and adult tissues.

The protein resides in the nucleus. It is found in the nucleolus. Functionally, plays a critical role in the generation of 28S rRNA. This Homo sapiens (Human) protein is Ribosomal RNA processing protein 1 homolog A (RRP1).